The following is a 143-amino-acid chain: Putative transcriptional regulatory protein PH0763 (143 aa).

Belongs to the Tfx family.

Putative transcriptional regulator. The polypeptide is Putative transcriptional regulatory protein PH0763 (Pyrococcus horikoshii (strain ATCC 700860 / DSM 12428 / JCM 9974 / NBRC 100139 / OT-3)).